Reading from the N-terminus, the 222-residue chain is GTP cyclohydrolase 1 (222 aa).

Residues Cys111, His114, and Cys182 each contribute to the Zn(2+) site.

This sequence belongs to the GTP cyclohydrolase I family. Toroid-shaped homodecamer, composed of two pentamers of five dimers.

It catalyses the reaction GTP + H2O = 7,8-dihydroneopterin 3'-triphosphate + formate + H(+). Its pathway is cofactor biosynthesis; 7,8-dihydroneopterin triphosphate biosynthesis; 7,8-dihydroneopterin triphosphate from GTP: step 1/1. The sequence is that of GTP cyclohydrolase 1 from Salmonella choleraesuis (strain SC-B67).